A 438-amino-acid chain; its full sequence is Carboxypeptidase A6 (438 aa).

The N-terminal stretch at M1 to C30 is a signal peptide. Positions H31 to R129 are cleaved as a propeptide — activation peptide. N-linked (GlcNAc...) asparagine glycans are attached at residues N89 and N153. The Peptidase M14 domain occupies V138 to L433. Zn(2+) contacts are provided by H197 and E200. Substrate-binding positions include H197–E200, R255, and N272–R273. Residues C266 and C289 are joined by a disulfide bond. A Zn(2+)-binding site is contributed by H325. Residue A326 to Y327 participates in substrate binding. N344 is a glycosylation site (N-linked (GlcNAc...) asparagine). Y377 is a substrate binding site. The active-site Proton donor/acceptor is E399. N428 is a glycosylation site (N-linked (GlcNAc...) asparagine).

This sequence belongs to the peptidase M14 family. Zn(2+) is required as a cofactor. In brain, highly expressed in the olfactory bulb with lower levels in other regions including cerebral cortex, hippocampus, hypothalamus, striatum and medulla. Within the olfactory bulb, highest levels occur in the mitral and granular layers with lower levels in the internal and external plexiform layers. Moderate levels are found in the epididymis with low levels in colon and spleen. Not detected in adrenal, liver, lung, ovary or testis. At embryonic day 14.5, enriched in eye, ear, osteoblasts, stomach, skin, dorsal root ganglia and throughout the CNS.

It localises to the secreted. The protein localises to the extracellular space. It is found in the extracellular matrix. Functionally, may be involved in the proteolytic inactivation of enkephalins and neurotensin in some brain areas. May convert inactive angiotensin I into the biologically active angiotensin II. Releases a C-terminal amino acid, with preference for large hydrophobic C-terminal amino acids and shows only very weak activity toward small amino acids and histidine. The sequence is that of Carboxypeptidase A6 (Cpa6) from Mus musculus (Mouse).